We begin with the raw amino-acid sequence, 374 residues long: Translocating chain-associated membrane protein 1 (374 aa).

Topologically, residues 2–29 are cytoplasmic; it reads AIRKKSTKSPPVLSHEFILQNHADIVSC. A helical transmembrane segment spans residues 30–50; sequence VAMVFLLGLMFEITAKASIIF. Topologically, residues 51–76 are lumenal; it reads VTLQYNVTLPATEEQATESTSLYYYG. N-linked (GlcNAc...) asparagine glycosylation is present at Asn-56. A helical transmembrane segment spans residues 77–97; sequence IKDLATVFFYMLVAIIIHAII. Over 98-121 the chain is Cytoplasmic; sequence QEYVLDKINRRMHFSKTKHSKFNE. The TLC domain maps to 117–326; that stretch reads SKFNESGQLS…NFQLRRWREH (210 aa). A helical membrane pass occupies residues 122 to 142; that stretch reads SGQLSAFYLFSCIWGTFILIS. Residues 143-159 lie on the Lumenal side of the membrane; that stretch reads ENYISDPTILWRAYPHN. The helical transmembrane segment at 160-180 threads the bilayer; it reads LMTFQMKFFYIAQLAYWFHAF. The Cytoplasmic segment spans residues 181-192; sequence PELYFQKTKKED. A helical transmembrane segment spans residues 193 to 213; the sequence is IPRQLVYIGLYLFHIAGAYLL. The Lumenal portion of the chain corresponds to 214–217; it reads NLNH. A helical transmembrane segment spans residues 218-238; sequence LGLVLLVLHYFVEFLFHISRL. Topologically, residues 239–251 are cytoplasmic; sequence FYFSDEKYQKGFS. The chain crosses the membrane as a helical span at residues 252-272; that stretch reads LWAVLFVLGRLLTLILSVLTV. Residues 273-297 lie on the Lumenal side of the membrane; the sequence is GFGLARAENQKLDFSAGNFNVLAVR. The helical transmembrane segment at 298–318 threads the bilayer; sequence IAVLASICITQAFMMWKFINF. Residues 319-374 are Cytoplasmic-facing; it reads QLRRWREHSTFQAPVVKKKPTVTKGRSSRKGTENGVNGTVTSNGADSPRNRKEKSS. The span at 334 to 347 shows a compositional bias: basic residues; that stretch reads VKKKPTVTKGRSSR. Positions 334–374 are disordered; the sequence is VKKKPTVTKGRSSRKGTENGVNGTVTSNGADSPRNRKEKSS. Positions 352–363 are enriched in polar residues; the sequence is NGVNGTVTSNGA. At Ser-365 the chain carries Phosphoserine.

The protein belongs to the TRAM family. As to quaternary structure, interacts with SEC61B. May interact with Derlin-1/DERL1. Post-translationally, N-glycosylated.

It localises to the endoplasmic reticulum membrane. Functionally, involved in the translocation of nascent protein chains into or through the endoplasmic reticulum (ER) membrane by facilitating the proper chain positioning at the SEC61 channel. Regulates the exposure of nascent secretory protein chain to the cytosol during translocation into the ER. May affect the phospholipid bilayer in the vicinity of the lateral gate of the SEC61 channel, thereby facilitating ER protein transport. Intimately associates with transmembrane (TM) domain of nascent membrane proteins during the entire integration process into the ER membrane. Associates with the second TM domain of G-protein-coupled receptor opsin/OPSD nascent chain in the ER membrane, which may facilitate its integration into the membrane. Under conditions of ER stress, participates in the disposal of misfolded ER membrane proteins during the unfolded protein response (UPR), an integrated stress response (ISR) pathway, by selectively retrotranslocating misfolded ER-membrane proteins from the ER into the cytosol where they are ubiquitinated and degraded by the proteasome. In Canis lupus familiaris (Dog), this protein is Translocating chain-associated membrane protein 1 (TRAM1).